We begin with the raw amino-acid sequence, 383 residues long: Mating-type protein MAT-1 (383 aa).

Positions 60 to 117 form a DNA-binding region, alpha box; sequence KARKALNAFVGFRCYYVTIPMFKSWPMKKLSNLIGLLWEADPNKSLWSLMAKAWSTIR.

It belongs to the MATALPHA1 family.

Its subcellular location is the nucleus. Its function is as follows. Mating type proteins are sequence specific DNA-binding proteins that act as master switches in fungal differentiation by controlling gene expression in a cell type-specific fashion. Transcriptional activator that induces the transcription of alpha-specific genes. In Cochliobolus heterostrophus (Southern corn leaf blight fungus), this protein is Mating-type protein MAT-1 (MAT1).